Reading from the N-terminus, the 376-residue chain is Alanine racemase 1 (376 aa).

K40 serves as the catalytic Proton acceptor; specific for D-alanine. K40 is subject to N6-(pyridoxal phosphate)lysine. R138 serves as a coordination point for substrate. Y268 acts as the Proton acceptor; specific for L-alanine in catalysis. Residue M316 participates in substrate binding.

It belongs to the alanine racemase family. Pyridoxal 5'-phosphate serves as cofactor.

The enzyme catalyses L-alanine = D-alanine. Its pathway is amino-acid biosynthesis; D-alanine biosynthesis; D-alanine from L-alanine: step 1/1. Functionally, catalyzes the interconversion of L-alanine and D-alanine. May also act on other amino acids. This is Alanine racemase 1 (alr1) from Oceanobacillus iheyensis (strain DSM 14371 / CIP 107618 / JCM 11309 / KCTC 3954 / HTE831).